A 142-amino-acid chain; its full sequence is Large ribosomal subunit protein uL13 (142 aa).

Belongs to the universal ribosomal protein uL13 family. Part of the 50S ribosomal subunit.

In terms of biological role, this protein is one of the early assembly proteins of the 50S ribosomal subunit, although it is not seen to bind rRNA by itself. It is important during the early stages of 50S assembly. This is Large ribosomal subunit protein uL13 from Ralstonia nicotianae (strain ATCC BAA-1114 / GMI1000) (Ralstonia solanacearum).